The sequence spans 60 residues: Lantibiotic Pep5 (60 aa).

Residues 1–26 constitute a propeptide that is removed on maturation; it reads MKNNKNLFDLEIKKETSQNTDELEPQ. Residues 1–29 form a disordered region; sequence MKNNKNLFDLEIKKETSQNTDELEPQTAG. At threonine 27 the chain carries 2-oxobutanoic acid. The segment at residues 35-39 is a cross-link (lanthionine (Ser-Cys)); that stretch reads SVKQC. 2,3-didehydrobutyrine occurs at positions 42 and 46. A cross-link (beta-methyllanthionine (Thr-Cys)) is located at residues 50 to 53; sequence TVSC. Positions 52-59 form a cross-link, lanthionine (Ser-Cys); that stretch reads SCKGKNGC.

This sequence belongs to the type A lantibiotic family. Maturation of lantibiotics involves the enzymatic conversion of Thr, and Ser into dehydrated AA and the formation of thioether bonds with cysteine. This is followed by membrane translocation and cleavage of the modified precursor. In terms of processing, after proteolysis of the propeptide, the N-terminal 2,3-didehydrobutyrine hydrolyzes to 2-oxobutanoic acid, possibly spontaneously.

Its function is as follows. Lanthionine-containing peptide antibiotic (lantibiotic) active on Gram-positive bacteria. The bactericidal activity of lantibiotics is based on depolarization of energized bacterial cytoplasmic membranes, initiated by the formation of aqueous transmembrane pores. In Staphylococcus epidermidis, this protein is Lantibiotic Pep5 (pepA).